The primary structure comprises 478 residues: uncharacterized protein (478 aa).

This is an uncharacterized protein from Schizosaccharomyces pombe (strain 972 / ATCC 24843) (Fission yeast).